Here is a 299-residue protein sequence, read N- to C-terminus: Putative adenosine/adenine deaminase (299 aa).

Residues His16 and His18 each contribute to the Zn(2+) site. His18 and Gly157 together coordinate substrate. Zn(2+) is bound at residue His184. Glu187 acts as the Proton donor in catalysis. Asp265 is a binding site for Zn(2+). A substrate-binding site is contributed by Asp266.

This sequence belongs to the metallo-dependent hydrolases superfamily. Adenosine and AMP deaminases family. Zn(2+) is required as a cofactor.

Functionally, putative nucleoside deaminase. May catalyze the hydrolytic deamination of adenosine or some similar substrate and play a role in purine metabolism. This is Putative adenosine/adenine deaminase from Treponema pallidum (strain Nichols).